Here is a 367-residue protein sequence, read N- to C-terminus: Undecaprenyl-phosphate alpha-N-acetylglucosaminyl 1-phosphate transferase (367 aa).

The next 10 helical transmembrane spans lie at 3–23 (LLTVSTDLISIFLFTTLFLFF), 46–66 (LIPLVGGISVYAGICFTFGIV), 69–89 (YIPHASLYLACAGVLVFIGAL), 132–152 (VLGPFGYFLTLFAVWAAINAF), 158–178 (IDGLLGGLSCVSFAAIGMILW), 187–207 (IWCFAMIAAILPYIMLNLGIL), 213–233 (VFMGDAGSTLIGFTVIWILLE), 242–262 (ISPVTALWIIAIPLMDMVAIM), 294–314 (AFVLITLAAALLASIGVLAEY), and 318–338 (VPEWVMLVLFLLAFFLYGYCI).

Belongs to the glycosyltransferase 4 family. WecA subfamily. Requires Mg(2+) as cofactor. The cofactor is Mn(2+).

It is found in the cell inner membrane. The enzyme catalyses di-trans,octa-cis-undecaprenyl phosphate + UDP-N-acetyl-alpha-D-glucosamine = N-acetyl-alpha-D-glucosaminyl-di-trans,octa-cis-undecaprenyl diphosphate + UMP. It functions in the pathway bacterial outer membrane biogenesis; LPS O-antigen biosynthesis. The protein operates within bacterial outer membrane biogenesis; enterobacterial common antigen biosynthesis. Its function is as follows. Catalyzes the transfer of the GlcNAc-1-phosphate moiety from UDP-GlcNAc onto the carrier lipid undecaprenyl phosphate (C55-P), yielding GlcNAc-pyrophosphoryl-undecaprenyl (GlcNAc-PP-C55). In Escherichia coli O6:H1 (strain CFT073 / ATCC 700928 / UPEC), this protein is Undecaprenyl-phosphate alpha-N-acetylglucosaminyl 1-phosphate transferase.